A 227-amino-acid chain; its full sequence is Cytochrome c oxidase subunit 2 (227 aa).

Residues 1–14 (MAHAAQVGLQDATS) are Mitochondrial intermembrane-facing. The helical transmembrane segment at 15–45 (PIMEELITFHDHALMIIFLICFLVLYALFLT) threads the bilayer. Over 46–59 (LTTKLTSTNISDAQ) the chain is Mitochondrial matrix. The chain crosses the membrane as a helical span at residues 60–87 (EMETIWTILPAIILVLIALPSLRILYMT). Residues 88–227 (DEINDPSFTI…IFEMGPVFAL (140 aa)) are Mitochondrial intermembrane-facing. Histidine 161, cysteine 196, glutamate 198, cysteine 200, histidine 204, and methionine 207 together coordinate Cu cation. Residue glutamate 198 participates in Mg(2+) binding.

It belongs to the cytochrome c oxidase subunit 2 family. Component of the cytochrome c oxidase (complex IV, CIV), a multisubunit enzyme composed of 14 subunits. The complex is composed of a catalytic core of 3 subunits MT-CO1, MT-CO2 and MT-CO3, encoded in the mitochondrial DNA, and 11 supernumerary subunits COX4I, COX5A, COX5B, COX6A, COX6B, COX6C, COX7A, COX7B, COX7C, COX8 and NDUFA4, which are encoded in the nuclear genome. The complex exists as a monomer or a dimer and forms supercomplexes (SCs) in the inner mitochondrial membrane with NADH-ubiquinone oxidoreductase (complex I, CI) and ubiquinol-cytochrome c oxidoreductase (cytochrome b-c1 complex, complex III, CIII), resulting in different assemblies (supercomplex SCI(1)III(2)IV(1) and megacomplex MCI(2)III(2)IV(2)). Found in a complex with TMEM177, COA6, COX18, COX20, SCO1 and SCO2. Interacts with TMEM177 in a COX20-dependent manner. Interacts with COX20. Interacts with COX16. The cofactor is Cu cation.

It is found in the mitochondrion inner membrane. The enzyme catalyses 4 Fe(II)-[cytochrome c] + O2 + 8 H(+)(in) = 4 Fe(III)-[cytochrome c] + 2 H2O + 4 H(+)(out). In terms of biological role, component of the cytochrome c oxidase, the last enzyme in the mitochondrial electron transport chain which drives oxidative phosphorylation. The respiratory chain contains 3 multisubunit complexes succinate dehydrogenase (complex II, CII), ubiquinol-cytochrome c oxidoreductase (cytochrome b-c1 complex, complex III, CIII) and cytochrome c oxidase (complex IV, CIV), that cooperate to transfer electrons derived from NADH and succinate to molecular oxygen, creating an electrochemical gradient over the inner membrane that drives transmembrane transport and the ATP synthase. Cytochrome c oxidase is the component of the respiratory chain that catalyzes the reduction of oxygen to water. Electrons originating from reduced cytochrome c in the intermembrane space (IMS) are transferred via the dinuclear copper A center (CU(A)) of subunit 2 and heme A of subunit 1 to the active site in subunit 1, a binuclear center (BNC) formed by heme A3 and copper B (CU(B)). The BNC reduces molecular oxygen to 2 water molecules using 4 electrons from cytochrome c in the IMS and 4 protons from the mitochondrial matrix. The protein is Cytochrome c oxidase subunit 2 (MT-CO2) of Gorilla gorilla gorilla (Western lowland gorilla).